A 348-amino-acid chain; its full sequence is MNGTEGPNFYVPFSNKTGVVRSPFEYPQYYLAEPWQFSMLAAYMFLLIVLGFPINFLTLYVTVQHKNVRTPLNYILLNLAVANHFMVFGGFTTTLYTSLHGYFVFGSTGCNLEGFFATLGGEIALWSLVVLAIERYVVVCKPMSNFRFGENHAIMGVAFTWVMALACAAPPLVGWSRYIPEGMQCSCGIDYYTLKPEVNNESFVIYMFVVHFTIPMTIIFFCYGQLVFTVKEAAAQQQESATTQKAEKEVTRMVIIMVIAFLICWVPYASVAFYIFTHQGSDFGPILMTLPAFFAKSSAIYNPVIYIMMNKQFRNCMLTTICCGKNPFGEEEGSTTASKTETSQVAPA.

N-acetylmethionine is present on M1. At 1–36 the chain is on the extracellular side; it reads MNGTEGPNFYVPFSNKTGVVRSPFEYPQYYLAEPWQ. Residues N2 and N15 are each glycosylated (N-linked (GlcNAc...) asparagine). A helical membrane pass occupies residues 37-61; the sequence is FSMLAAYMFLLIVLGFPINFLTLYV. Residues 62–73 lie on the Cytoplasmic side of the membrane; the sequence is TVQHKNVRTPLN. Residues 74–96 form a helical membrane-spanning segment; the sequence is YILLNLAVANHFMVFGGFTTTLY. Residues 97–110 lie on the Extracellular side of the membrane; that stretch reads TSLHGYFVFGSTGC. Cysteines 110 and 187 form a disulfide. A helical membrane pass occupies residues 111–133; sequence NLEGFFATLGGEIALWSLVVLAI. Positions 134-136 match the 'Ionic lock' involved in activated form stabilization motif; sequence ERY. Topologically, residues 134–152 are cytoplasmic; sequence ERYVVVCKPMSNFRFGENH. The helical transmembrane segment at 153-173 threads the bilayer; sequence AIMGVAFTWVMALACAAPPLV. At 174–202 the chain is on the extracellular side; the sequence is GWSRYIPEGMQCSCGIDYYTLKPEVNNES. E201 provides a ligand contact to Zn(2+). A helical membrane pass occupies residues 203–224; it reads FVIYMFVVHFTIPMTIIFFCYG. Residues 225 to 252 lie on the Cytoplasmic side of the membrane; the sequence is QLVFTVKEAAAQQQESATTQKAEKEVTR. The chain crosses the membrane as a helical span at residues 253-274; the sequence is MVIIMVIAFLICWVPYASVAFY. The Extracellular segment spans residues 275–286; sequence IFTHQGSDFGPI. A Zn(2+)-binding site is contributed by Q279. The helical transmembrane segment at 287–308 threads the bilayer; that stretch reads LMTLPAFFAKSSAIYNPVIYIM. Residue K296 is modified to N6-(retinylidene)lysine. The Cytoplasmic segment spans residues 309–348; the sequence is MNKQFRNCMLTTICCGKNPFGEEEGSTTASKTETSQVAPA. Residues C322 and C323 are each lipidated (S-palmitoyl cysteine). An interaction with SAG region spans residues 330–348; the sequence is EEEGSTTASKTETSQVAPA. S334 bears the Phosphoserine mark. A phosphothreonine mark is found at T335 and T336. S338 is subject to Phosphoserine. Residues T340 and T342 each carry the phosphothreonine modification. The residue at position 343 (S343) is a Phosphoserine.

It belongs to the G-protein coupled receptor 1 family. Opsin subfamily. As to quaternary structure, homodimer. May form a complex composed of RHO, GRK1 and RCVRN in a Ca(2+)-dependent manner; RCVRN prevents the interaction between GRK1 and RHO. Interacts with GRK1. Interacts (phosphorylated form) with SAG. Interacts with GNAT1. Interacts with GNAT3. SAG and G-proteins compete for a common binding site. Interacts with PRCD; the interaction promotes PRCD stability. Forms a complex with ASAP1 and ARF4. Forms a complex with ASAP1, RAB11A, Rabin8/RAB3IP, ARF4 and RAB11FIP3; the complex regulates Golgi-to-cilia rhodopsin/RHO transport in photoreceptors. Post-translationally, phosphorylated on some or all of the serine and threonine residues present in the C-terminal region. Contains one covalently linked retinal chromophore. Upon light absorption, the covalently bound 11-cis-retinal is converted to all-trans-retinal. After hydrolysis of the Schiff base and release of the covalently bound all-trans-retinal, active rhodopsin is regenerated by binding of a fresh molecule of 11-cis-retinal.

Its subcellular location is the membrane. It is found in the cell projection. The protein resides in the cilium. It localises to the photoreceptor outer segment. Photoreceptor required for image-forming vision at low light intensity. Required for photoreceptor cell viability after birth. Light-induced isomerization of 11-cis to all-trans retinal triggers a conformational change that activates signaling via G-proteins. Subsequent receptor phosphorylation mediates displacement of the bound G-protein alpha subunit by the arrestin SAG and terminates signaling. The sequence is that of Rhodopsin (RHO) from Loxodonta africana (African elephant).